The primary structure comprises 88 residues: MANIKSAKKRIKVIETKTLRNKMLKSSLKTTIKNFLTVVEGKNVEEAKAAYKTAARALDMSVSKGIIHKNKAARTKSRLAAKLNALNA.

Belongs to the bacterial ribosomal protein bS20 family.

In terms of biological role, binds directly to 16S ribosomal RNA. This is Small ribosomal subunit protein bS20 from Clostridium botulinum (strain 657 / Type Ba4).